The following is a 159-amino-acid chain: Voltage-dependent N-type calcium channel subunit alpha-1B (159 aa).

The chain crosses the membrane as a helical span at residues leucine 1–isoleucine 5. The stretch at leucine 1–isoleucine 159 is one IV repeat. Over alanine 6–asparagine 13 the chain is Extracellular. Asparagine 13 carries an N-linked (GlcNAc...) asparagine glycan. A helical membrane pass occupies residues leucine 14–glycine 32. Residues tyrosine 33–tyrosine 51 lie on the Cytoplasmic side of the membrane. A helical membrane pass occupies residues valine 52–phenylalanine 71. Residues glycine 72–phenylalanine 135 are Extracellular-facing. Residues alanine 136–phenylalanine 155 traverse the membrane as a helical segment. Over valine 156–isoleucine 159 the chain is Cytoplasmic.

This sequence belongs to the calcium channel alpha-1 subunit (TC 1.A.1.11) family. CACNA1B subfamily. Multisubunit complex consisting of alpha-1, alpha-2, beta and delta subunits in a 1:1:1:1 ratio. The channel activity is directed by the pore-forming and voltage-sensitive alpha-1 subunit. In many cases, this subunit is sufficient to generate voltage-sensitive calcium channel activity. The auxiliary subunits beta and alpha-2/delta linked by a disulfide bridge regulate the channel activity. Interacts with RIMBP2. Post-translationally, phosphorylated in vitro by CaM-kinase II, PKA, PKC and CGPK.

Its subcellular location is the membrane. The catalysed reaction is Ca(2+)(in) = Ca(2+)(out). Voltage-sensitive calcium channels (VSCC) mediate the entry of calcium ions into excitable cells and are also involved in a variety of calcium-dependent processes, including muscle contraction, hormone or neurotransmitter release, gene expression, cell motility, cell division and cell death. This alpha-1B subunit gives rise to N-type calcium currents. N-type calcium channels belong to the 'high-voltage activated' (HVA) group. They are involved in pain signaling. Calcium channels containing alpha-1B subunit may play a role in directed migration of immature neurons. Mediates Ca(2+) release probability at hippocampal neuronal soma and synaptic terminals. The polypeptide is Voltage-dependent N-type calcium channel subunit alpha-1B (CACNA1B) (Gallus gallus (Chicken)).